The primary structure comprises 557 residues: Aerobic glycerol-3-phosphate dehydrogenase (557 aa).

21–49 (DLVIIGGGITGAGIALDASERGMKVALVE) contributes to the FAD binding site.

It belongs to the FAD-dependent glycerol-3-phosphate dehydrogenase family. It depends on FAD as a cofactor.

The protein resides in the cytoplasm. It catalyses the reaction a quinone + sn-glycerol 3-phosphate = dihydroxyacetone phosphate + a quinol. Its pathway is polyol metabolism; glycerol degradation via glycerol kinase pathway; glycerone phosphate from sn-glycerol 3-phosphate (aerobic route): step 1/1. The chain is Aerobic glycerol-3-phosphate dehydrogenase (glpD) from Staphylococcus aureus (strain USA300).